Consider the following 254-residue polypeptide: Alcohol dehydrogenase 1 (254 aa).

10–33 (FVAGLGGIGLDTSREIVKSGPKNL) lines the NAD(+) pocket. Ser138 provides a ligand contact to substrate. Tyr151 serves as the catalytic Proton acceptor.

The protein belongs to the short-chain dehydrogenases/reductases (SDR) family. As to quaternary structure, homodimer.

The enzyme catalyses a primary alcohol + NAD(+) = an aldehyde + NADH + H(+). It catalyses the reaction a secondary alcohol + NAD(+) = a ketone + NADH + H(+). The chain is Alcohol dehydrogenase 1 (Adh1) from Drosophila montana (Fruit fly).